Here is a 546-residue protein sequence, read N- to C-terminus: Oncoprotein-induced transcript 3 protein (546 aa).

A signal peptide spans 1–16 (MPLSLLLACLFTTVTL). 2 N-linked (GlcNAc...) asparagine glycosylation sites follow: Asn89 and Asn116. The region spanning 182 to 222 (DENECEHNNGGCSEICVNLKNSHRCACGVGRVLRSDGKTCE) is the EGF-like; calcium-binding domain. 3 disulfides stabilise this stretch: Cys186–Cys197, Cys193–Cys206, and Cys208–Cys221. Residues 261-516 (TCQVPVLCKS…SRCAQGCHRR (256 aa)) form the ZP domain. Asn299 carries an N-linked (GlcNAc...) asparagine glycan. The tract at residues 524-546 (DEDSAGLQSQTLTGGPISIDWEE) is disordered.

The protein localises to the nucleus envelope. In terms of biological role, may be involved in hepatocellular function and development. This Rattus norvegicus (Rat) protein is Oncoprotein-induced transcript 3 protein (Oit3).